The chain runs to 745 residues: AP-3 complex subunit beta (745 aa).

At S638 the chain carries Phosphoserine. The tract at residues 674 to 745 is disordered; sequence YASETSESSE…TEPEPNYWQS (72 aa). Acidic residues predominate over residues 680-718; sequence ESSEGEYETSTSESEDEETDDTSQEEDNEKNSTPDEDTE.

This sequence belongs to the adaptor complexes large subunit family. As to quaternary structure, adaptor protein complex 3 (AP-3) is a heterotetramer composed of 2 large adaptins (apl5 and apl6), a medium adaptin (apm3) and a small adaptin (aps3).

The protein resides in the golgi apparatus. It is found in the cytoplasmic vesicle. The protein localises to the clathrin-coated vesicle membrane. Adaptins are components of the adaptor complexes which link clathrin to receptors in coated vesicles. Clathrin-associated protein complexes are believed to interact with the cytoplasmic tails of membrane proteins, leading to their selection and concentration. Beta adaptin is a subunit of the plasma membrane adaptor. The sequence is that of AP-3 complex subunit beta (apl6) from Schizosaccharomyces pombe (strain 972 / ATCC 24843) (Fission yeast).